The chain runs to 198 residues: Neutrophil gelatinase-associated lipocalin (198 aa).

The signal sequence occupies residues methionine 1 to alanine 20. Glutamine 21 carries the pyrrolidone carboxylic acid modification. Position 72-74 (tyrosine 72–threonine 74) interacts with a carboxymycobactin. Asparagine 85 carries an N-linked (GlcNAc...) asparagine glycan. Cysteines 96 and 195 form a disulfide. Tyrosine 126 lines the enterobactin pocket. A carboxymycobactin is bound by residues lysine 145, lysine 154, and tyrosine 158. Lysine 154 serves as a coordination point for enterobactin.

Belongs to the calycin superfamily. Lipocalin family. Monomer. Homodimer; disulfide-linked. Heterodimer; disulfide-linked with MMP9. In terms of tissue distribution, detected in the ureteric bud in embryonic kidney (at protein level).

It localises to the secreted. The protein localises to the cytoplasmic granule lumen. The protein resides in the cytoplasmic vesicle lumen. In terms of biological role, iron-trafficking protein involved in multiple processes such as apoptosis, innate immunity and renal development. Binds iron through association with 2,3-dihydroxybenzoic acid (2,3-DHBA), a siderophore that shares structural similarities with bacterial enterobactin, and delivers or removes iron from the cell, depending on the context. Iron-bound form (holo-24p3) is internalized following binding to the SLC22A17 (24p3R) receptor, leading to release of iron and subsequent increase of intracellular iron concentration. In contrast, association of the iron-free form (apo-24p3) with the SLC22A17 (24p3R) receptor is followed by association with an intracellular siderophore, iron chelation and iron transfer to the extracellular medium, thereby reducing intracellular iron concentration. Involved in apoptosis due to interleukin-3 (IL3) deprivation: iron-loaded form increases intracellular iron concentration without promoting apoptosis, while iron-free form decreases intracellular iron levels, inducing expression of the proapoptotic protein BCL2L11/BIM, resulting in apoptosis. Involved in innate immunity; limits bacterial proliferation by sequestering iron bound to microbial siderophores, such as enterobactin. Can also bind siderophores from M.tuberculosis. In Rattus norvegicus (Rat), this protein is Neutrophil gelatinase-associated lipocalin (Lcn2).